Consider the following 288-residue polypeptide: Large ribosomal subunit protein uL2 (288 aa).

Positions 232 to 265 (GTAMNPVDHPHGGGEGKTKGKHPESPWGWKTKGY) are disordered. Basic and acidic residues predominate over residues 239 to 255 (DHPHGGGEGKTKGKHPE).

The protein belongs to the universal ribosomal protein uL2 family. In terms of assembly, part of the 50S ribosomal subunit. Forms a bridge to the 30S subunit in the 70S ribosome.

Its function is as follows. One of the primary rRNA binding proteins. Required for association of the 30S and 50S subunits to form the 70S ribosome, for tRNA binding and peptide bond formation. It has been suggested to have peptidyltransferase activity; this is somewhat controversial. Makes several contacts with the 16S rRNA in the 70S ribosome. The sequence is that of Large ribosomal subunit protein uL2 from Hydrogenobaculum sp. (strain Y04AAS1).